A 468-amino-acid polypeptide reads, in one-letter code: Aldehyde dehydrogenase family 3 member B1 (468 aa).

Residue M1 is modified to N-acetylmethionine. 188 to 193 provides a ligand contact to NAD(+); the sequence is GNAYVG. Catalysis depends on residues E210 and C244. Residues C462 and C463 are each lipidated (S-palmitoyl cysteine). Residue C465 is modified to Cysteine methyl ester. A lipid anchor (S-geranylgeranyl cysteine) is attached at C465. Positions 466-468 are cleaved as a propeptide — removed in mature form; that stretch reads TLL.

This sequence belongs to the aldehyde dehydrogenase family. In terms of processing, dually lipidated in the C-terminus; prenylation occurs prior to, and is a prerequisite for palmitoylation. It is also required for activity towards long-chain substrates. In terms of tissue distribution, highly expressed in kidney and liver. In brain is expressed at moderate levels in cortex, striatum and hippocampus, and at lower levels in brainstem and cerebellum.

The protein localises to the cell membrane. It carries out the reaction an aldehyde + NAD(+) + H2O = a carboxylate + NADH + 2 H(+). The catalysed reaction is a long-chain fatty aldehyde + NAD(+) + H2O = a long-chain fatty acid + NADH + 2 H(+). It catalyses the reaction a medium-chain fatty aldehyde + NAD(+) + H2O = a medium-chain fatty acid + NADH + 2 H(+). The enzyme catalyses octanal + NAD(+) + H2O = octanoate + NADH + 2 H(+). It carries out the reaction nonanal + NAD(+) + H2O = nonanoate + NADH + 2 H(+). The catalysed reaction is hexadecanoate + NADH + 2 H(+) = hexadecanal + NAD(+) + H2O. It catalyses the reaction (2E)-octenal + NAD(+) + H2O = (2E)-octenoate + NADH + 2 H(+). The enzyme catalyses (E)-non-2-enal + NAD(+) + H2O = (E)-non-2-enoate + NADH + 2 H(+). It carries out the reaction (E)-4-hydroxynon-2-enal + NAD(+) + H2O = (E)-4-hydroxynon-2-enoate + NADH + 2 H(+). The catalysed reaction is (2E)-hexadecenal + NAD(+) + H2O = (E)-hexadec-2-enoate + NADH + 2 H(+). It catalyses the reaction benzaldehyde + NAD(+) + H2O = benzoate + NADH + 2 H(+). The enzyme catalyses an aldehyde + NADP(+) + H2O = a carboxylate + NADPH + 2 H(+). It carries out the reaction a medium-chain fatty aldehyde + NADP(+) + H2O = a medium-chain fatty acid + NADPH + 2 H(+). The catalysed reaction is hexanal + NADP(+) + H2O = hexanoate + NADPH + 2 H(+). It catalyses the reaction octanal + NADP(+) + H2O = octanoate + NADPH + 2 H(+). The enzyme catalyses nonanal + NADP(+) + H2O = nonanoate + NADPH + 2 H(+). It carries out the reaction (2E)-octenal + NADP(+) + H2O = (2E)-octenoate + NADPH + 2 H(+). The catalysed reaction is (E)-non-2-enal + NADP(+) + H2O = (E)-non-2-enoate + NADPH + 2 H(+). It catalyses the reaction (E)-4-hydroxynon-2-enal + NADP(+) + H2O = (E)-4-hydroxynon-2-enoate + NADPH + 2 H(+). The enzyme catalyses benzaldehyde + NADP(+) + H2O = benzoate + NADPH + 2 H(+). Its pathway is alcohol metabolism; ethanol degradation; acetate from ethanol: step 2/2. Its function is as follows. Oxidizes medium and long chain saturated and unsaturated fatty aldehydes generated in the plasma membrane into non-toxic fatty acids. May have a protective role against the cytotoxicity induced by lipid peroxidation. Short-chain fatty aldehydes are not good substrates. Can use both NADP(+) and NAD(+) as electron acceptor in vitro, however in vivo preference will depend on their tissue levels. Low activity towards acetaldehyde and 3,4-dihydroxyphenylacetaldehyde. Able to metabolize aromatic aldehydes such as benzaldehyde to their acid form. This is Aldehyde dehydrogenase family 3 member B1 (Aldh3b1) from Mus musculus (Mouse).